Consider the following 175-residue polypeptide: MGKITFFEDRGFQGRCYECSSDCPNLQTYFSRCNSVRVDSGCWMLYERPNYQGHQYFLRRGDYPDYQQWMGFSDSIRSCRLIPQHSGTYRMRIYERDDFRGQMSEITDDCLSLQDRFHLSEIHSLNVMEGCWVLYEMPSYRGRQYLLRPGEYRRYLDWGAANAKVGSFRRVMDFY.

2 Beta/gamma crystallin 'Greek key' domains span residues 2 to 40 (GKITFFEDRGFQGRCYECSSDCPNLQTYFSRCNSVRVDS) and 41 to 83 (GCWM…RLIP). The tract at residues 84-88 (QHSGT) is connecting peptide. Beta/gamma crystallin 'Greek key' domains follow at residues 89–129 (YRMR…NVME) and 130–172 (GCWV…RRVM).

This sequence belongs to the beta/gamma-crystallin family.

Crystallins are the dominant structural components of the vertebrate eye lens. This chain is Gamma-crystallin B (Crygb), found in Rattus norvegicus (Rat).